The primary structure comprises 441 residues: G-protein coupled receptor family C group 5 member C (441 aa).

Positions 1-23 (MAIHKALVMCLGLPLFLFPGAWA) are cleaved as a signal peptide. Over 24-50 (QGHVPPGCSQGLNPLYYNLCDRSGAWG) the chain is Extracellular. The chain crosses the membrane as a helical span at residues 51–71 (IVLEAVAGAGIVTTFVLTIIL). Topologically, residues 72–85 (VASLPFVQDTKKRS) are cytoplasmic. A helical membrane pass occupies residues 86-106 (LLGTQVFFLLGTLGLFCLVFA). Residues 107–120 (CVVKPDFSTCASRR) are Extracellular-facing. A helical transmembrane segment spans residues 121–141 (FLFGVLFAICFSCLAAHVFAL). The Cytoplasmic portion of the chain corresponds to 142-155 (NFLARKNHGPRGWV). Residues 156–176 (IFTVALLLTLVEVIINTEWLI) form a helical membrane-spanning segment. The Extracellular segment spans residues 177-208 (ITLVRGSGEGGPQGNSSAGWAVASPCAIANMD). N-linked (GlcNAc...) asparagine glycosylation is present at N191. Residues 209–229 (FVMALIYVMLLLLGAFLGAWP) traverse the membrane as a helical segment. At 230-241 (ALCGRYKRWRKH) the chain is on the cytoplasmic side. The chain crosses the membrane as a helical span at residues 242 to 262 (GVFVLLTTATSVAIWVVWIVM). Residues 263 to 279 (YTYGNKQHNSPTWDDPT) lie on the Extracellular side of the membrane. The helical transmembrane segment at 280–300 (LAIALAANAWAFVLFYVIPEV) threads the bilayer. Topologically, residues 301–441 (SQVTKSSPEQ…QVFRNPYVWD (141 aa)) are cytoplasmic. Phosphoserine is present on residues S344, S383, S403, and S406. A disordered region spans residues 412 to 441 (DMYSAQSHQAATPPKDGKNSQVFRNPYVWD). The residue at position 414 (Y414) is a Phosphotyrosine. Residue T423 is modified to Phosphothreonine.

Belongs to the G-protein coupled receptor 3 family. In terms of tissue distribution, expression is highest in the periphery, particularly in the stomach, but also in the kidney, liver, pancreas, and prostate. In brain, levels of expression are generally lower than in the periphery, with the exception of cerebellum, spinal cord, and dorsal root ganglia (DRG).

Its subcellular location is the cell membrane. It localises to the cytoplasmic vesicle membrane. Its function is as follows. This retinoic acid-inducible G-protein coupled receptor provide evidence for a possible interaction between retinoid and G-protein signaling pathways. This is G-protein coupled receptor family C group 5 member C (GPRC5C) from Homo sapiens (Human).